Consider the following 340-residue polypeptide: Phosphatidylglycerol--prolipoprotein diacylglyceryl transferase (340 aa).

Helical transmembrane passes span 19–39, 54–74, 93–113, and 119–139; these read IPLRGYAFCIIIGVFVAVWLG, ADIAVWAVPFGLVGGRLYHVI, IWEGGLGIWGAIALGAVGAWI, and GIPLPAWADAVAPGIAFAQAF. Residue Arg-141 participates in a 1,2-diacyl-sn-glycero-3-phospho-(1'-sn-glycerol) binding. Transmembrane regions (helical) follow at residues 176 to 196, 202 to 221, and 238 to 258; these read HPTFLYESLWCVGVGFLVIWA, LGHGRAFALYVAAYCVGRAW, and LNDWTAIAVFLLAVLYIVLSS. The interval 266–340 is disordered; that stretch reads EIVEPGASDT…ESAAESAKKV (75 aa). Over residues 284 to 294 the composition is skewed to basic and acidic residues; sequence DLGKDEDKATT. Over residues 295–307 the composition is skewed to low complexity; sequence DKATATDTSTTTD. Residues 326-340 are compositionally biased toward basic and acidic residues; it reads PSEKTESAAESAKKV.

It belongs to the Lgt family.

It localises to the cell membrane. It carries out the reaction L-cysteinyl-[prolipoprotein] + a 1,2-diacyl-sn-glycero-3-phospho-(1'-sn-glycerol) = an S-1,2-diacyl-sn-glyceryl-L-cysteinyl-[prolipoprotein] + sn-glycerol 1-phosphate + H(+). It functions in the pathway protein modification; lipoprotein biosynthesis (diacylglyceryl transfer). Functionally, catalyzes the transfer of the diacylglyceryl group from phosphatidylglycerol to the sulfhydryl group of the N-terminal cysteine of a prolipoprotein, the first step in the formation of mature lipoproteins. This chain is Phosphatidylglycerol--prolipoprotein diacylglyceryl transferase, found in Streptomyces avermitilis (strain ATCC 31267 / DSM 46492 / JCM 5070 / NBRC 14893 / NCIMB 12804 / NRRL 8165 / MA-4680).